The chain runs to 991 residues: Translation initiation factor IF-2 (991 aa).

Disordered regions lie at residues 58–82 (EGKK…GRSR) and 106–405 (QARA…PAPQ). A compositionally biased stretch (low complexity) spans 106-164 (QARADAAASDAAPAEPAPAAAEPSASAPVTAPVNAPAADAPQAPATAAPDTAAPAAETP). Positions 165 to 175 (SQPPAVEPQPA) are enriched in pro residues. Low complexity-rich tracts occupy residues 190-206 (AKPA…AAVE), 221-258 (AVQA…ASKP), and 267-276 (APVPVAAPAV). Basic and acidic residues predominate over residues 279 to 289 (AGREEARRAAE). Residues 379-388 (RAGGKGGKGG) show a composition bias toward gly residues. The span at 395-405 (QAERRHEPAPQ) shows a compositional bias: basic and acidic residues. A tr-type G domain is found at 492-659 (PRAPVVTVMG…NVLLQAEILE (168 aa)). Residues 501–508 (GHVDHGKT) are G1. A GTP-binding site is contributed by 501 to 508 (GHVDHGKT). The interval 526–530 (GITQH) is G2. The interval 547-550 (DTPG) is G3. GTP is bound by residues 547–551 (DTPGH) and 601–604 (NKID). Residues 601-604 (NKID) form a G4 region. A G5 region spans residues 637 to 639 (SAK).

The protein belongs to the TRAFAC class translation factor GTPase superfamily. Classic translation factor GTPase family. IF-2 subfamily.

The protein resides in the cytoplasm. Its function is as follows. One of the essential components for the initiation of protein synthesis. Protects formylmethionyl-tRNA from spontaneous hydrolysis and promotes its binding to the 30S ribosomal subunits. Also involved in the hydrolysis of GTP during the formation of the 70S ribosomal complex. The chain is Translation initiation factor IF-2 from Bordetella petrii (strain ATCC BAA-461 / DSM 12804 / CCUG 43448).